Consider the following 663-residue polypeptide: DNA ligase 1 (663 aa).

NAD(+) is bound by residues 28-32 (DKEYD) and 76-77 (SL). Lysine 118 serves as the catalytic N6-AMP-lysine intermediate. Residues arginine 139, glutamate 173, and lysine 310 each contribute to the NAD(+) site. Zn(2+) is bound by residues cysteine 403, cysteine 406, cysteine 419, and cysteine 425. The 81-residue stretch at 583–663 (VSESVFNDKT…KFEELIESVK (81 aa)) folds into the BRCT domain.

Belongs to the NAD-dependent DNA ligase family. LigA subfamily. Mg(2+) serves as cofactor. It depends on Mn(2+) as a cofactor.

The catalysed reaction is NAD(+) + (deoxyribonucleotide)n-3'-hydroxyl + 5'-phospho-(deoxyribonucleotide)m = (deoxyribonucleotide)n+m + AMP + beta-nicotinamide D-nucleotide.. Its function is as follows. DNA ligase that catalyzes the formation of phosphodiester linkages between 5'-phosphoryl and 3'-hydroxyl groups in double-stranded DNA using NAD as a coenzyme and as the energy source for the reaction. It is essential for DNA replication and repair of damaged DNA. The sequence is that of DNA ligase 1 from Clostridium acetobutylicum (strain ATCC 824 / DSM 792 / JCM 1419 / IAM 19013 / LMG 5710 / NBRC 13948 / NRRL B-527 / VKM B-1787 / 2291 / W).